The sequence spans 439 residues: Glucose-6-phosphate 1-dehydrogenase (439 aa).

NADP(+) is bound at residue Lys-100. Residues His-130, Lys-134, Glu-168, and Asp-187 each contribute to the substrate site. His-192 functions as the Proton acceptor in the catalytic mechanism. Lys-288 contributes to the substrate binding site.

This sequence belongs to the glucose-6-phosphate dehydrogenase family.

The catalysed reaction is D-glucose 6-phosphate + NADP(+) = 6-phospho-D-glucono-1,5-lactone + NADPH + H(+). Its pathway is carbohydrate degradation; pentose phosphate pathway; D-ribulose 5-phosphate from D-glucose 6-phosphate (oxidative stage): step 1/3. Functionally, catalyzes the oxidation of glucose 6-phosphate to 6-phosphogluconolactone. This is Glucose-6-phosphate 1-dehydrogenase from Chlamydia trachomatis serovar D (strain ATCC VR-885 / DSM 19411 / UW-3/Cx).